The sequence spans 248 residues: tRNA pseudouridine synthase A (248 aa).

The active-site Nucleophile is D52. Y113 is a binding site for substrate.

This sequence belongs to the tRNA pseudouridine synthase TruA family. As to quaternary structure, homodimer.

It catalyses the reaction uridine(38/39/40) in tRNA = pseudouridine(38/39/40) in tRNA. In terms of biological role, formation of pseudouridine at positions 38, 39 and 40 in the anticodon stem and loop of transfer RNAs. This Mesorhizobium japonicum (strain LMG 29417 / CECT 9101 / MAFF 303099) (Mesorhizobium loti (strain MAFF 303099)) protein is tRNA pseudouridine synthase A.